Here is a 251-residue protein sequence, read N- to C-terminus: Dehydration-responsive element-binding protein 1I (251 aa).

The tract at residues 1-50 (MCTSKLEEITGEWPPPALQAASTTSSSEPCRRLSPPSSKRPAGRTKFHET) is disordered. Residues 54 to 114 (VFRGVRRRGR…GRAAACLNFA (61 aa)) constitute a DNA-binding region (AP2/ERF). A disordered region spans residues 169-198 (ATSEPSAASDDDAVTSSSSTTDADEEASPF).

This sequence belongs to the AP2/ERF transcription factor family. ERF subfamily.

The protein localises to the nucleus. In terms of biological role, transcriptional activator that binds specifically to the DNA sequence 5'-[AG]CCGAC-3'. Binding to the C-repeat/DRE element mediates high salinity- and dehydration-inducible transcription. This Oryza sativa subsp. japonica (Rice) protein is Dehydration-responsive element-binding protein 1I (DREB1I).